We begin with the raw amino-acid sequence, 329 residues long: ADP-L-glycero-D-manno-heptose-6-epimerase (329 aa).

NADP(+) is bound by residues 10-11 (FI), 31-32 (DD), Lys38, Lys53, 74-78 (QGACS), and Asn91. The active-site Proton acceptor is Tyr138. Lys142 serves as a coordination point for NADP(+). Asn167 provides a ligand contact to substrate. Residues Val168 and Lys176 each coordinate NADP(+). Residue Lys176 is the Proton acceptor of the active site. Substrate-binding positions include Arg178, His185, 199-202 (FAGW), Arg212, and Tyr291.

It belongs to the NAD(P)-dependent epimerase/dehydratase family. HldD subfamily. Homopentamer. NADP(+) serves as cofactor.

It catalyses the reaction ADP-D-glycero-beta-D-manno-heptose = ADP-L-glycero-beta-D-manno-heptose. Its pathway is nucleotide-sugar biosynthesis; ADP-L-glycero-beta-D-manno-heptose biosynthesis; ADP-L-glycero-beta-D-manno-heptose from D-glycero-beta-D-manno-heptose 7-phosphate: step 4/4. It participates in bacterial outer membrane biogenesis; LPS core biosynthesis. In terms of biological role, catalyzes the interconversion between ADP-D-glycero-beta-D-manno-heptose and ADP-L-glycero-beta-D-manno-heptose via an epimerization at carbon 6 of the heptose. In Bordetella pertussis (strain Tohama I / ATCC BAA-589 / NCTC 13251), this protein is ADP-L-glycero-D-manno-heptose-6-epimerase.